Consider the following 186-residue polypeptide: Large ribosomal subunit protein uL22 (186 aa).

Positions 160-186 are disordered; it reads AAENEPAKKKLSKKKLQRQKEKMMRNE. Residues 177–186 are compositionally biased toward basic and acidic residues; sequence RQKEKMMRNE.

Belongs to the universal ribosomal protein uL22 family.

The protein is Large ribosomal subunit protein uL22 (RpL17) of Aedes aegypti (Yellowfever mosquito).